Here is a 254-residue protein sequence, read N- to C-terminus: Triosephosphate isomerase (254 aa).

12–14 (NWK) is a binding site for substrate. H99 functions as the Electrophile in the catalytic mechanism. E169 acts as the Proton acceptor in catalysis. Substrate contacts are provided by residues G175, S214, and 235–236 (GG).

Belongs to the triosephosphate isomerase family. As to quaternary structure, homodimer.

The protein localises to the cytoplasm. It carries out the reaction D-glyceraldehyde 3-phosphate = dihydroxyacetone phosphate. The protein operates within carbohydrate biosynthesis; gluconeogenesis. Its pathway is carbohydrate degradation; glycolysis; D-glyceraldehyde 3-phosphate from glycerone phosphate: step 1/1. Its function is as follows. Involved in the gluconeogenesis. Catalyzes stereospecifically the conversion of dihydroxyacetone phosphate (DHAP) to D-glyceraldehyde-3-phosphate (G3P). This Chelativorans sp. (strain BNC1) protein is Triosephosphate isomerase.